The sequence spans 419 residues: CCA-adding enzyme (419 aa).

2 residues coordinate ATP: Ser-54 and Arg-57. Residues Ser-54 and Arg-57 each coordinate CTP. The Mg(2+) site is built by Asp-66, Asp-68, and Asp-118. His-141, Lys-161, and Tyr-170 together coordinate ATP. CTP contacts are provided by His-141, Lys-161, and Tyr-170.

This sequence belongs to the tRNA nucleotidyltransferase/poly(A) polymerase family. Archaeal CCA-adding enzyme subfamily. As to quaternary structure, homodimer. Mg(2+) is required as a cofactor.

The enzyme catalyses a tRNA precursor + 2 CTP + ATP = a tRNA with a 3' CCA end + 3 diphosphate. It carries out the reaction a tRNA with a 3' CCA end + 2 CTP + ATP = a tRNA with a 3' CCACCA end + 3 diphosphate. In terms of biological role, catalyzes the addition and repair of the essential 3'-terminal CCA sequence in tRNAs without using a nucleic acid template. Adds these three nucleotides in the order of C, C, and A to the tRNA nucleotide-73, using CTP and ATP as substrates and producing inorganic pyrophosphate. tRNA 3'-terminal CCA addition is required both for tRNA processing and repair. Also involved in tRNA surveillance by mediating tandem CCA addition to generate a CCACCA at the 3' terminus of unstable tRNAs. While stable tRNAs receive only 3'-terminal CCA, unstable tRNAs are marked with CCACCA and rapidly degraded. In Pyrobaculum aerophilum (strain ATCC 51768 / DSM 7523 / JCM 9630 / CIP 104966 / NBRC 100827 / IM2), this protein is CCA-adding enzyme.